A 243-amino-acid polypeptide reads, in one-letter code: Probable transcriptional regulatory protein Smlt3713 (243 aa).

It belongs to the TACO1 family.

The protein localises to the cytoplasm. The sequence is that of Probable transcriptional regulatory protein Smlt3713 from Stenotrophomonas maltophilia (strain K279a).